Here is a 360-residue protein sequence, read N- to C-terminus: NAD(P)H-quinone oxidoreductase subunit 1, chloroplastic (360 aa).

8 consecutive transmembrane segments (helical) span residues 30 to 50 (FLPI…LVWL), 98 to 118 (FSIG…VIPF), 127 to 147 (FNIG…GLLM), 165 to 185 (AAQS…ISLL), 203 to 223 (FWGW…ISSL), 253 to 273 (FGLF…FVTV), 297 to 317 (IFGT…FLFI), and 340 to 360 (FLLP…VFSL).

This sequence belongs to the complex I subunit 1 family. In terms of assembly, NDH is composed of at least 16 different subunits, 5 of which are encoded in the nucleus.

It is found in the plastid. The protein localises to the chloroplast thylakoid membrane. It carries out the reaction a plastoquinone + NADH + (n+1) H(+)(in) = a plastoquinol + NAD(+) + n H(+)(out). The enzyme catalyses a plastoquinone + NADPH + (n+1) H(+)(in) = a plastoquinol + NADP(+) + n H(+)(out). In terms of biological role, NDH shuttles electrons from NAD(P)H:plastoquinone, via FMN and iron-sulfur (Fe-S) centers, to quinones in the photosynthetic chain and possibly in a chloroplast respiratory chain. The immediate electron acceptor for the enzyme in this species is believed to be plastoquinone. Couples the redox reaction to proton translocation, and thus conserves the redox energy in a proton gradient. The polypeptide is NAD(P)H-quinone oxidoreductase subunit 1, chloroplastic (Aethionema cordifolium (Lebanon stonecress)).